Reading from the N-terminus, the 456-residue chain is Glutamate-gated chloride channel (456 aa).

Residues 1–22 form the signal peptide; sequence MGSGHYFWAILYFASLCSASLA. Topologically, residues 23–245 are extracellular; that stretch reads NNAKINFREK…VDLLFKREFS (223 aa). L-glutamate is bound by residues arginine 71, arginine 90, and serine 154. Cysteines 163 and 177 form a disulfide. L-glutamate is bound at residue serine 183. An intrachain disulfide couples cysteine 222 to cysteine 233. Residues 246–268 form a helical membrane-spanning segment; the sequence is YYLIQIYIPCCMLVIVSWVSFWL. At 269-273 the chain is on the cytoplasmic side; the sequence is DQGAV. A helical membrane pass occupies residues 274–295; the sequence is PARVSLGVTTLLTMATQTSGIN. Residues 296 to 302 are Extracellular-facing; the sequence is ASLPPVS. A helical membrane pass occupies residues 303 to 323; sequence YTKAIDVWTGVCLTFVFGALL. At 324–426 the chain is on the cytoplasmic side; it reads EFALVNYASR…RQCSRSKRID (103 aa). A helical transmembrane segment spans residues 427 to 450; the sequence is VISRITFPLVFALFNLVYWSTYLF. At 451-456 the chain is on the extracellular side; it reads REEEDE.

The protein belongs to the ligand-gated ion channel (TC 1.A.9) family. Glutamate-gated chloride channel (TC 1.A.9.4) subfamily. In terms of assembly, pentamer. Homomultimer. Expressed in the medulla layers (at protein level). Expressed in all major ON pathway medulla neurons (Mi1, Tm3, Mi4, and Mi9) and in OFF pathway neurons (Tm1, Tm2, Tm4, and Tm9).

It is found in the postsynaptic cell membrane. It localises to the cell membrane. With respect to regulation, glutamate binding triggers a rapidly reversible current, while the anti-helmintic drug ivermectin triggers a permanently open channel configuration. Inhibited by picrotoxin. Its function is as follows. Glutamate-gated chloride channel subunit. Together with Gamma-aminobutyric acid receptor Rdl, plays an important role in the visual response by regulating the activity of ON/OFF-selective neurons. This Drosophila melanogaster (Fruit fly) protein is Glutamate-gated chloride channel (GluClalpha).